Consider the following 71-residue polypeptide: uncharacterized protein (71 aa).

Residues 15-71 (PNFEYARRLNGKKVKIFLRNGEVLDAEVTGVSNYEIMVKVGDRNLLVFKHAIDYIEY) enclose the Sm domain.

This is an uncharacterized protein from Methanocaldococcus jannaschii (strain ATCC 43067 / DSM 2661 / JAL-1 / JCM 10045 / NBRC 100440) (Methanococcus jannaschii).